A 560-amino-acid polypeptide reads, in one-letter code: Digoxin reductase (560 aa).

Positions 1 to 48 form a signal peptide, tat-type signal; that stretch reads MEYGKCRGIERGMGRRDFLKAATLLGATAAGAGMLAGCAPKSASEAQA.

The protein belongs to the FAD-dependent oxidoreductase 2 family. As to quaternary structure, may form a membrane-associated complex with Cgr1. Requires FAD as cofactor. [4Fe-4S] cluster is required as a cofactor. Predicted to be exported by the Tat system. The position of the signal peptide cleavage has not been experimentally proven.

It is found in the cell membrane. The catalysed reaction is digoxin + 2 Fe(II)-[cytochrome c] + 3 H(+) = dihydrodigoxin + 2 Fe(III)-[cytochrome c]. The enzyme catalyses digitoxin + 2 Fe(II)-[cytochrome c] + 3 H(+) = dihydrodigitoxin + 2 Fe(III)-[cytochrome c]. It carries out the reaction digoxigenin + 2 Fe(II)-[cytochrome c] + 3 H(+) = dihydrodigoxigenin + 2 Fe(III)-[cytochrome c]. It catalyses the reaction ouabain + 2 Fe(II)-[cytochrome c] + 3 H(+) = dihydroouabain + 2 Fe(III)-[cytochrome c]. The catalysed reaction is ouabagenin + 2 Fe(II)-[cytochrome c] + 3 H(+) = dihydroouabagenin + 2 Fe(III)-[cytochrome c]. Functionally, involved in the inactivation of the cardiac medication and plant natural product digoxin, thus decreasing drug efficacy and toxicity. Catalyzes the reduction of the alpha,beta-unsaturated butyrolactone ring of digoxin to the inactive metabolite dihydrodigoxin. Likely uses the cytochrome Cgr1 as the physiological electron donor, encoded by the adjacent gene in the locus. Only reduces digoxin and other cardenolide toxins, such as digitoxin, digoxigenin, ouabain and ouabagenin. Therefore is a specialized enzyme present in some gut bacteria E.lenta that protects their human host against ingested plant toxins. This chain is Digoxin reductase, found in Eggerthella lenta (strain ATCC 25559 / DSM 2243 / CCUG 17323 / JCM 9979 / KCTC 3265 / NCTC 11813 / VPI 0255 / 1899 B) (Eubacterium lentum).